The chain runs to 136 residues: Protein NrdI (136 aa).

This sequence belongs to the NrdI family.

In terms of biological role, probably involved in ribonucleotide reductase function. The protein is Protein NrdI of Erwinia tasmaniensis (strain DSM 17950 / CFBP 7177 / CIP 109463 / NCPPB 4357 / Et1/99).